The primary structure comprises 494 residues: Glutamate decarboxylase 5 (494 aa).

At K276 the chain carries N6-(pyridoxal phosphate)lysine.

It belongs to the group II decarboxylase family. Homohexamer. Interacts with calmodulin. Pyridoxal 5'-phosphate is required as a cofactor. Expressed in flowers.

The enzyme catalyses L-glutamate + H(+) = 4-aminobutanoate + CO2. Functionally, catalyzes the production of GABA. The calmodulin-binding is calcium-dependent and it is proposed that this may, directly or indirectly, form a calcium regulated control of GABA biosynthesis. The polypeptide is Glutamate decarboxylase 5 (GAD5) (Arabidopsis thaliana (Mouse-ear cress)).